A 313-amino-acid chain; its full sequence is 4-hydroxy-3-methylbut-2-enyl diphosphate reductase (313 aa).

Position 12 (C12) interacts with [4Fe-4S] cluster. (2E)-4-hydroxy-3-methylbut-2-enyl diphosphate contacts are provided by H41 and H74. Dimethylallyl diphosphate-binding residues include H41 and H74. Isopentenyl diphosphate is bound by residues H41 and H74. C96 lines the [4Fe-4S] cluster pocket. H124 is a (2E)-4-hydroxy-3-methylbut-2-enyl diphosphate binding site. H124 provides a ligand contact to dimethylallyl diphosphate. H124 serves as a coordination point for isopentenyl diphosphate. The active-site Proton donor is E126. T167 provides a ligand contact to (2E)-4-hydroxy-3-methylbut-2-enyl diphosphate. [4Fe-4S] cluster is bound at residue C197. S225, S226, N227, and S269 together coordinate (2E)-4-hydroxy-3-methylbut-2-enyl diphosphate. Residues S225, S226, N227, and S269 each coordinate dimethylallyl diphosphate. Isopentenyl diphosphate-binding residues include S225, S226, N227, and S269.

It belongs to the IspH family. [4Fe-4S] cluster serves as cofactor.

The enzyme catalyses isopentenyl diphosphate + 2 oxidized [2Fe-2S]-[ferredoxin] + H2O = (2E)-4-hydroxy-3-methylbut-2-enyl diphosphate + 2 reduced [2Fe-2S]-[ferredoxin] + 2 H(+). It catalyses the reaction dimethylallyl diphosphate + 2 oxidized [2Fe-2S]-[ferredoxin] + H2O = (2E)-4-hydroxy-3-methylbut-2-enyl diphosphate + 2 reduced [2Fe-2S]-[ferredoxin] + 2 H(+). It participates in isoprenoid biosynthesis; dimethylallyl diphosphate biosynthesis; dimethylallyl diphosphate from (2E)-4-hydroxy-3-methylbutenyl diphosphate: step 1/1. The protein operates within isoprenoid biosynthesis; isopentenyl diphosphate biosynthesis via DXP pathway; isopentenyl diphosphate from 1-deoxy-D-xylulose 5-phosphate: step 6/6. In terms of biological role, catalyzes the conversion of 1-hydroxy-2-methyl-2-(E)-butenyl 4-diphosphate (HMBPP) into a mixture of isopentenyl diphosphate (IPP) and dimethylallyl diphosphate (DMAPP). Acts in the terminal step of the DOXP/MEP pathway for isoprenoid precursor biosynthesis. The protein is 4-hydroxy-3-methylbut-2-enyl diphosphate reductase of Baumannia cicadellinicola subsp. Homalodisca coagulata.